Here is a 126-residue protein sequence, read N- to C-terminus: Protein ApaG (126 aa).

In terms of domain architecture, ApaG spans 2-126 (SDPRYQIDVS…FRLAVPGALH (125 aa)).

This chain is Protein ApaG, found in Pseudomonas putida (strain W619).